The primary structure comprises 160 residues: Ribosomal RNA large subunit methyltransferase H (160 aa).

S-adenosyl-L-methionine contacts are provided by residues leucine 77, glycine 109, and 128–133 (FGRITL).

This sequence belongs to the RNA methyltransferase RlmH family. In terms of assembly, homodimer.

The protein resides in the cytoplasm. The enzyme catalyses pseudouridine(1915) in 23S rRNA + S-adenosyl-L-methionine = N(3)-methylpseudouridine(1915) in 23S rRNA + S-adenosyl-L-homocysteine + H(+). Its function is as follows. Specifically methylates the pseudouridine at position 1915 (m3Psi1915) in 23S rRNA. The protein is Ribosomal RNA large subunit methyltransferase H of Oenococcus oeni (strain ATCC BAA-331 / PSU-1).